A 437-amino-acid chain; its full sequence is Enolase (437 aa).

Q162 contacts (2R)-2-phosphoglycerate. The active-site Proton donor is the E204. 3 residues coordinate Mg(2+): D251, E297, and D324. Residues K349, R378, S379, and K400 each coordinate (2R)-2-phosphoglycerate. The Proton acceptor role is filled by K349.

This sequence belongs to the enolase family. Requires Mg(2+) as cofactor.

The protein localises to the cytoplasm. It localises to the secreted. It is found in the cell surface. It catalyses the reaction (2R)-2-phosphoglycerate = phosphoenolpyruvate + H2O. The protein operates within carbohydrate degradation; glycolysis; pyruvate from D-glyceraldehyde 3-phosphate: step 4/5. Its function is as follows. Catalyzes the reversible conversion of 2-phosphoglycerate (2-PG) into phosphoenolpyruvate (PEP). It is essential for the degradation of carbohydrates via glycolysis. This chain is Enolase, found in Chlorobaculum parvum (strain DSM 263 / NCIMB 8327) (Chlorobium vibrioforme subsp. thiosulfatophilum).